The chain runs to 562 residues: Arf-GAP domain and FG repeat-containing protein 1 (562 aa).

Residues 11–135 (EKHLKMLRDM…WYVPPEQAKV (125 aa)) form the Arf-GAP domain. The C4-type zinc-finger motif lies at 29–52 (CFDCDQRGPTYVNMTVGSFVCTSC). Residues 145–193 (GSSASSTSSTPEVKPLKSLLGDSAPTLHLNKGTPSQSPVVGRSQGQQQE) form a disordered region. Ser167 is modified (phosphoserine). Over residues 176–191 (GTPSQSPVVGRSQGQQ) the composition is skewed to polar residues. Residue Thr177 is modified to Phosphothreonine. Phosphoserine occurs at positions 181 and 362. The O-linked (GlcNAc) serine glycan is linked to Ser367.

As to quaternary structure, interacts with EPS15R and EPS15. Interacts with FCHO1. O-glycosylated. In terms of tissue distribution, ubiquitously expressed.

Its subcellular location is the nucleus. It is found in the cytoplasmic vesicle. Functionally, required for vesicle docking or fusion during acrosome biogenesis. May play a role in RNA trafficking or localization. In case of infection by HIV-1, acts as a cofactor for viral Rev and promotes movement of Rev-responsive element-containing RNAs from the nuclear periphery to the cytoplasm. This step is essential for HIV-1 replication. The chain is Arf-GAP domain and FG repeat-containing protein 1 (AGFG1) from Homo sapiens (Human).